A 429-amino-acid polypeptide reads, in one-letter code: Protein ABERRANT PANICLE ORGANIZATION 1 (429 aa).

A compositionally biased stretch (pro residues) spans methionine 1 to proline 11. Residues methionine 1–aspartate 21 are disordered. An F-box domain is found at proline 25–histidine 71. Helical transmembrane passes span leucine 72–leucine 92 and valine 112–leucine 132. Kelch repeat units follow at residues methionine 229–glycine 277, arginine 284–glycine 339, and tyrosine 350–glycine 397.

In terms of assembly, part of a putative SCF (ASK/Cullin/F-box) ubiquitin ligase complex. Interacts with FL/APO2. Expressed in seedlings, roots, leaves, shoot apical meristem (SAM), developing panicles, and, at lower levels, in developing seeds.

It localises to the membrane. It participates in protein modification; protein ubiquitination. Component of SCF(ASK-cullin-F-box) E3 ubiquitin ligase complexes, which may mediate the ubiquitination and subsequent proteasomal degradation of target proteins. Together with FL/APO2, involved in the temporal regulation of meristem identity during both vegetative and reproductive developments in an APO2-dependent manner. Promotes spikelet formation by suppressing the precocious conversion of inflorescence meristems to spikelet meristems, probably via a positive regulation of class-C floral homeotic genes, but not of class-B genes, and through the control of cell proliferation in meristems. Mediates culm development and strength/diameter enhancement at internodes. Required for the regulation of the plastochron, floral organ identity, and floral determinacy. Controls the number of primary rachis branches (PRBs). May trigger the formation of vascular bundle systems which, consequently, promote carbohydrate translocation to panicles. Involved in ozone-induced grain yield regulation. The polypeptide is Protein ABERRANT PANICLE ORGANIZATION 1 (Oryza sativa subsp. indica (Rice)).